Reading from the N-terminus, the 663-residue chain is RING finger protein 145 (663 aa).

Transmembrane regions (helical) follow at residues 53-73, 77-97, 123-143, 146-166, 168-188, 205-222, 225-245, 275-295, 316-336, 340-360, 384-404, 410-430, 460-480, and 482-502; these read YLAL…LTLP, LVQL…HQIS, FTTA…VMKT, IWLF…VPLE, IVII…YFLG, LVQV…MSLW, LVVP…QIYS, YSLL…LTLC, TEGV…LQVV, FLLS…MLEI, SLCL…CQFF, LLII…TLFI, LLEF…TIFG, and WTVM…WLRA. The YLYF motif motif lies at 81-84; that stretch reads YLYF. Cysteine 537 is a catalytic residue. The segment at 537-575 adopts an RING-type; atypical zinc-finger fold; that stretch reads CAICYQDMKSAVITPCSHFFHAGCLKKWLYVQETCPLCH. The segment at 607–663 is disordered; sequence EGTEPPGQEHTPGTRIQEGSRDNNEYIARRPDNQEGAFDPKEYPHSAKDEAHPVESA. Over residues 624 to 663 the composition is skewed to basic and acidic residues; the sequence is EGSRDNNEYIARRPDNQEGAFDPKEYPHSAKDEAHPVESA.

As to quaternary structure, interacts (via YLYF motif) with INSIG1 and INSIG2.

It localises to the endoplasmic reticulum membrane. It carries out the reaction S-ubiquitinyl-[E2 ubiquitin-conjugating enzyme]-L-cysteine + [acceptor protein]-L-lysine = [E2 ubiquitin-conjugating enzyme]-L-cysteine + N(6)-ubiquitinyl-[acceptor protein]-L-lysine.. In terms of biological role, E3 ubiquitin ligase that catalyzes the direct transfer of ubiquitin from E2 ubiquitin-conjugating enzyme to a specific substrate. In response to bacterial infection, negatively regulates the phagocyte oxidative burst by controlling the turnover of the NADPH oxidase complex subunits. Promotes monoubiquitination of CYBA and 'Lys-48'-linked polyubiquitination and degradation of CYBB NADPH oxidase catalytic subunits, both essential for the generation of antimicrobial reactive oxygen species. Involved in the maintenance of cholesterol homeostasis. In response to high sterol concentrations ubiquitinates HMGCR, a rate-limiting enzyme in cholesterol biosynthesis, and targets it for degradation. The interaction with INSIG1 is required for this function. In addition, triggers ubiquitination of SCAP, likely inhibiting its transport to the Golgi apparatus and the subsequent processing/maturation of SREBPF2, ultimately down-regulating cholesterol biosynthesis. This Homo sapiens (Human) protein is RING finger protein 145.